The chain runs to 416 residues: MALKVLPLHRTVLFAAILFLLHLACKVSCETGDCRQQEFKDRSGNCVLCKQCGPGMELSKECGFGYGEDAQCVPCRPHRFKEDWGFQKCKPCADCALVNRFQRANCSHTSDAVCGDCLPGFYRKTKLVGFQDMECVPCGDPPPPYEPHCTSKVNLVKISSTVSSPRDTALAAVICSALATVLLALLILCVIYCKRQFMEKKPSWSLRSQDIQYNGSELSCFDQPRLRHCAHRACCQYHRDSAPMYGPVHLIPSLCCEEARSSARAVLGCGLRSPTTLQERNPASVGDTMPAFFGSVSRSICAEFSDAWPLMQNPLGGDSSLCDSYPELTGEDTNSLNPENESAASLDSSGGQDLAGTAALESSGNVSESTDSPRHGDTGTVWEQTLAQDAQRTPSQGGWEDRENLNLAMPTAFQDA.

Positions 1-29 are cleaved as a signal peptide; it reads MALKVLPLHRTVLFAAILFLLHLACKVSC. The Extracellular segment spans residues 30–170; that stretch reads ETGDCRQQEF…TVSSPRDTAL (141 aa). TNFR-Cys repeat units follow at residues 33–72 and 74–114; these read DCRQ…DAQC and PCRP…DAVC. 8 disulfide bridges follow: cysteine 34–cysteine 46, cysteine 49–cysteine 62, cysteine 52–cysteine 72, cysteine 75–cysteine 89, cysteine 92–cysteine 106, cysteine 95–cysteine 114, cysteine 117–cysteine 135, and cysteine 138–cysteine 149. N-linked (GlcNAc...) asparagine glycosylation occurs at asparagine 105. A TNFR-Cys 3; truncated repeat occupies 116–149; sequence DCLPGFYRKTKLVGFQDMECVPCGDPPPPYEPHC. Residues 171 to 191 traverse the membrane as a helical segment; it reads AAVICSALATVLLALLILCVI. The Cytoplasmic segment spans residues 192-416; that stretch reads YCKRQFMEKK…LAMPTAFQDA (225 aa). Positions 321–416 are disordered; it reads LCDSYPELTG…LAMPTAFQDA (96 aa). Polar residues-rich tracts occupy residues 331–351, 360–370, and 381–396; these read EDTN…SSGG, LESSGNVSEST, and VWEQ…TPSQ.

In terms of assembly, associates with TRAF1, TRAF2, TRAF3 and TRAF5. Interacts with LINGO1. In terms of tissue distribution, highly expressed in adult brain, and in embryos from day 11-17, but not earlier. Detected in embryonic brain and epithelium, and at lower levels in adult heart, lung and liver. In neonatal mice, mainly in hair follicles and neuron-like cells in the cerebellum, but not in the skin epidermis. Isoform 3 was found in embryonic day 17.5 skin but not in brain and liver.

The protein localises to the cell membrane. The protein resides in the secreted. Functionally, can mediate activation of c-Jun and NF-kappa-B. May promote caspase-independent cell death. Isoform 2 and isoform 3 may act as decoy receptors. This Mus musculus (Mouse) protein is Tumor necrosis factor receptor superfamily member 19 (Tnfrsf19).